A 260-amino-acid chain; its full sequence is tRNA pseudouridine synthase C (260 aa).

The active site involves Asp54.

It belongs to the pseudouridine synthase RluA family.

It catalyses the reaction uridine(65) in tRNA = pseudouridine(65) in tRNA. Responsible for synthesis of pseudouridine from uracil-65 in transfer RNAs. The protein is tRNA pseudouridine synthase C (truC) of Escherichia coli (strain K12).